The sequence spans 537 residues: Phosphoenolpyruvate carboxykinase (ATP) (537 aa).

The substrate site is built by Arg-61, Tyr-195, and Lys-201. Residues Lys-201, His-220, and Gly-236–Thr-244 each bind ATP. 2 residues coordinate Mn(2+): Lys-201 and His-220. Asp-257 provides a ligand contact to Mn(2+). Residues Glu-285, Arg-323, and Thr-448 each contribute to the ATP site. Arg-323 contacts substrate.

The protein belongs to the phosphoenolpyruvate carboxykinase (ATP) family. Mn(2+) is required as a cofactor.

Its subcellular location is the cytoplasm. The catalysed reaction is oxaloacetate + ATP = phosphoenolpyruvate + ADP + CO2. Its pathway is carbohydrate biosynthesis; gluconeogenesis. Functionally, involved in the gluconeogenesis. Catalyzes the conversion of oxaloacetate (OAA) to phosphoenolpyruvate (PEP) through direct phosphoryl transfer between the nucleoside triphosphate and OAA. In Rhodopseudomonas palustris (strain HaA2), this protein is Phosphoenolpyruvate carboxykinase (ATP).